Here is a 463-residue protein sequence, read N- to C-terminus: uncharacterized protein (463 aa).

An N-terminal signal peptide occupies residues 1 to 23; the sequence is MKFSSIPIASTLLSLLVASSVTA. 2 disordered regions span residues 174-200 and 239-258; these read STYN…TKAS and GAST…QRKN.

It belongs to the but2 family.

It is found in the cytoplasm. This is an uncharacterized protein from Schizosaccharomyces pombe (strain 972 / ATCC 24843) (Fission yeast).